Consider the following 325-residue polypeptide: Methionine import ATP-binding protein MetN 3 (325 aa).

Residues 2-239 form the ABC transporter domain; that stretch reads IEVQQLCKVY…PQSALGRALL (238 aa). 36 to 43 is an ATP binding site; that stretch reads GRSGAGKS.

It belongs to the ABC transporter superfamily. Methionine importer (TC 3.A.1.24) family. As to quaternary structure, the complex is composed of two ATP-binding proteins (MetN), two transmembrane proteins (MetI) and a solute-binding protein (MetQ).

It is found in the cell inner membrane. It carries out the reaction L-methionine(out) + ATP + H2O = L-methionine(in) + ADP + phosphate + H(+). The enzyme catalyses D-methionine(out) + ATP + H2O = D-methionine(in) + ADP + phosphate + H(+). In terms of biological role, part of the ABC transporter complex MetNIQ involved in methionine import. Responsible for energy coupling to the transport system. This chain is Methionine import ATP-binding protein MetN 3, found in Pseudomonas fluorescens (strain ATCC BAA-477 / NRRL B-23932 / Pf-5).